The following is a 78-amino-acid chain: Apolipoprotein C-I (78 aa).

A signal peptide spans 1-26; sequence MRLILCLPVLVVVLLMVLEGPAPAQG.

It belongs to the apolipoprotein C1 family.

It is found in the secreted. Its function is as follows. Inhibitor of lipoprotein binding to the low density lipoprotein (LDL) receptor, LDL receptor-related protein, and very low density lipoprotein (VLDL) receptor. Associates with high density lipoproteins (HDL) and the triacylglycerol-rich lipoproteins in the plasma and makes up about 10% of the protein of the VLDL and 2% of that of HDL. Appears to interfere directly with fatty acid uptake and is also the major plasma inhibitor of cholesteryl ester transfer protein (CETP). Binds free fatty acids and reduces their intracellular esterification. Modulates the interaction of APOE with beta-migrating VLDL and inhibits binding of beta-VLDL to the LDL receptor-related protein. This is Apolipoprotein C-I (APOC1) from Acinonyx jubatus (Cheetah).